A 147-amino-acid chain; its full sequence is MRTYSPKPGEIERQWHVIDASDVVLGRLATHAATLLRGKHKPTFAPHVDTGDFVVIVNAGKVALTGNKRQQKIAYRHSGYPGGLKQLGYDELLTKRPERAIELAVKGMLPHNKLGRKLIKKLKVYAGAEHPHGAQQPVPFEIKQIAQ.

Belongs to the universal ribosomal protein uL13 family. As to quaternary structure, part of the 50S ribosomal subunit.

Its function is as follows. This protein is one of the early assembly proteins of the 50S ribosomal subunit, although it is not seen to bind rRNA by itself. It is important during the early stages of 50S assembly. This Salinispora arenicola (strain CNS-205) protein is Large ribosomal subunit protein uL13.